Here is a 979-residue protein sequence, read N- to C-terminus: MLEVLDMAPPRHQPAAGKAGGGRGHGHGHGHGGGGGGPAARKQPLQSSMAQPKAETAAATAAVAPPEGGKKCGGGGGRRRGGRGRGGRAGAGPGPGLAAAPAVVVAPAARAVIGPPVASKGLSFCRRPGFGTVGARCVVKANHFLAELPDKDLTQYDVKITPEVSSRSVNRAIMSELVRLYHDSDLGGRLPAYDGRKNLYTAGTLPFDAREFVVRLTDDDDGTGVPPREREYRVAIKFAARADLHHLRQFIAGRQADAPQEALQVLDIVLRELANRRYVSIGRSFYSPDIRKPQRLGDGLQSWCGFYQSIRPTQMGLSLNIDMSSTAFIEPLPVIEFVAQILGKDVISRPLSDANRIKIKKALRGVKVEVTHRGNVRRKYRISGLTTQPTHELIFPIDDQMNMKSVVEYFKEMYGFTIQHPHLPCLQVGNQKKANYLPMEACKIVEGQRYTKRLNEKQITSLLKVTCRRPREQEMDILQTVQQNGYEQDPYAKEFGINISEKLTSVEARVLPAPWLKYHDTGKEKECLPQVGQWNMVNKKVINGCKVNHWACINFSRSVQETTARGFCQELAQMCQISGMEFNSEPVIPIYSARPDQVEKALKHVYNMSLNKLKGKELELLLAILPDNNGSLYGDIKRICETDLGLISQCCLTKHVFKISKQYLANVSLKINVKMGGRNTVLLDAISWRIPLVSDIPTIIFGADVTHPETGEDSSPSIAAVVASQDWPEVTKYAGLVCAQAHRQELIQDLYKTWHDPQRGTVTGGMIRELLISFRKATGQKPLRIIFYRDGVSEGQFYQVLLYELDAIRKACASLEPNYQPPVTFVVVQKRHHTRLFANNHKDRSSTDKSGNILPGTVVDSKICHPSEFDFYLCSHAGIQGTSRPAHYHVLWDENNFTADEMQTLTNNLCYTYARCTRSVSVVPPAYYAHLAAFRARFYMEPEMSENQTTSKSSTGTNGTSVKPLPAVKEKVKRVMFYC.

The disordered stretch occupies residues 1–95 (MLEVLDMAPP…GGRAGAGPGP (95 aa)). A compositionally biased stretch (low complexity) spans 54–67 (AETAAATAAVAPPE). Positions 77–86 (GRRRGGRGRG) are enriched in basic residues. The PAZ domain maps to 333-446 (PVIEFVAQIL…LPMEACKIVE (114 aa)). Residues 620 to 941 (LLLAILPDNN…AAFRARFYME (322 aa)) enclose the Piwi domain.

This sequence belongs to the argonaute family. Ago subfamily.

It is found in the cytoplasm. Probably involved in the RNA silencing pathway. May bind to short RNAs such as microRNAs (miRNAs) or short interfering RNAs (siRNAs), and represses the translation of mRNAs which are complementary to them. Plays a role in the maintenance of the indeterminate state of the stem cells in the shoot apical meristem (SAM). Regulates leaf formation through vascular development and may be involved in determining the central domain of the leaf founder region. The chain is Protein argonaute PNH1 (PHN1) from Oryza sativa subsp. japonica (Rice).